A 197-amino-acid polypeptide reads, in one-letter code: 7-methyl-GTP pyrophosphatase (197 aa).

The active-site Proton acceptor is Asp74.

It belongs to the Maf family. YceF subfamily. A divalent metal cation is required as a cofactor.

Its subcellular location is the cytoplasm. It carries out the reaction N(7)-methyl-GTP + H2O = N(7)-methyl-GMP + diphosphate + H(+). In terms of biological role, nucleoside triphosphate pyrophosphatase that hydrolyzes 7-methyl-GTP (m(7)GTP). May have a dual role in cell division arrest and in preventing the incorporation of modified nucleotides into cellular nucleic acids. The sequence is that of 7-methyl-GTP pyrophosphatase from Saccharophagus degradans (strain 2-40 / ATCC 43961 / DSM 17024).